Consider the following 391-residue polypeptide: ATP phosphoribosyltransferase regulatory subunit (391 aa).

This sequence belongs to the class-II aminoacyl-tRNA synthetase family. HisZ subfamily. As to quaternary structure, heteromultimer composed of HisG and HisZ subunits.

The protein localises to the cytoplasm. Its pathway is amino-acid biosynthesis; L-histidine biosynthesis; L-histidine from 5-phospho-alpha-D-ribose 1-diphosphate: step 1/9. Its function is as follows. Required for the first step of histidine biosynthesis. May allow the feedback regulation of ATP phosphoribosyltransferase activity by histidine. The sequence is that of ATP phosphoribosyltransferase regulatory subunit from Prochlorococcus marinus (strain NATL1A).